The primary structure comprises 492 residues: Serine incorporator 4 (492 aa).

Helical transmembrane passes span 58 to 78 (FYIL…SKTV), 113 to 133 (AVYR…VLLV), 148 to 168 (SFWS…FCIP), 179 to 199 (IGIC…TAFA), 217 to 237 (FLGV…GAVL), 254 to 274 (LLSL…APCI), 281 to 301 (SGLL…FSAL), 330 to 350 (IPDA…VLFA), 421 to 441 (GFHF…TNWF), and 464 to 484 (VASC…PLLA).

The protein belongs to the TDE1 family.

It is found in the membrane. Incorporates a polar amino acid serine into membranes and facilitates the synthesis of two serine-derived lipids, phosphatidylserine and sphingolipids. The polypeptide is Serine incorporator 4 (Serinc4) (Rattus norvegicus (Rat)).